Here is a 160-residue protein sequence, read N- to C-terminus: Cytochrome b6-f complex subunit 4 (160 aa).

Transmembrane regions (helical) follow at residues 36 to 56, 95 to 115, and 131 to 151; these read LLYI…GLAV, LLGV…PFLE, and TVFL…AMPI.

The protein belongs to the cytochrome b family. PetD subfamily. In terms of assembly, the 4 large subunits of the cytochrome b6-f complex are cytochrome b6, subunit IV (17 kDa polypeptide, petD), cytochrome f and the Rieske protein, while the 4 small subunits are petG, petL, petM and petN. The complex functions as a dimer.

It is found in the plastid. Its subcellular location is the chloroplast thylakoid membrane. In terms of biological role, component of the cytochrome b6-f complex, which mediates electron transfer between photosystem II (PSII) and photosystem I (PSI), cyclic electron flow around PSI, and state transitions. The chain is Cytochrome b6-f complex subunit 4 from Zygnema circumcarinatum (Green alga).